The chain runs to 372 residues: N-acetyllactosaminide beta-1,3-N-acetylglucosaminyltransferase 3 (372 aa).

The Cytoplasmic segment spans residues 1–10 (MKYLRHRRPN). A helical; Signal-anchor for type II membrane protein membrane pass occupies residues 11-31 (ATLILAIGAFTLLLFSLLVSP). The Lumenal segment spans residues 32–372 (PTCKVQEQPP…LTCGNQTQIY (341 aa)). Asparagine 64, asparagine 184, asparagine 202, asparagine 362, and asparagine 367 each carry an N-linked (GlcNAc...) asparagine glycan.

It belongs to the glycosyltransferase 31 family. Expressed in colon, jejunum, stomach, esophagus, placenta and trachea.

The protein resides in the golgi apparatus membrane. It carries out the reaction a 3-O-{beta-D-galactosyl-(1-&gt;3)-[N-acetyl-beta-D-glucosaminyl-(1-&gt;6)]-N-acetyl-alpha-D-galactosaminyl}-L-threonyl-[protein] + UDP-N-acetyl-alpha-D-glucosamine = 3-O-{beta-D-GlcNAc-(1-&gt;3)-beta-D-Gal-(1-&gt;3)-[beta-D-GlcNAc-(1-&gt;6)]-alpha-D-GalNAc}-L-threonyl-[protein] + UDP + H(+). The enzyme catalyses 3-O-{beta-D-galactosyl-(1-&gt;3)-[N-acetyl-beta-D-glucosaminyl-(1-&gt;6)]-N-acetyl-alpha-D-galactosaminyl}-L-seryl-[protein] + UDP-N-acetyl-alpha-D-glucosamine = 3-O-{beta-D-GlcNAc-(1-&gt;3)-beta-D-Gal-(1-&gt;3)-[beta-D-GlcNAc-(1-&gt;6)]-alpha-D-GalNAc}-L-seryl-[protein] + UDP + H(+). The catalysed reaction is a beta-D-galactosyl-(1-&gt;4)-N-acetyl-beta-D-glucosaminyl derivative + UDP-N-acetyl-alpha-D-glucosamine = an N-acetyl-beta-D-glucosaminyl-(1-&gt;3)-beta-D-galactosyl-(1-&gt;4)-N-acetyl-beta-D-glucosaminyl derivative + UDP + H(+). The protein operates within protein modification; protein glycosylation. Beta-1,3-N-acetylglucosaminyltransferase involved in the synthesis of poly-N-acetyllactosamine. Has activity for type 2 oligosaccharides. Also acts as a core1-1,3-N-acetylglucosaminyltransferase (Core1-beta3GlcNAcT) to form the 6-sulfo sialyl Lewis x on extended core1 O-glycans. This is N-acetyllactosaminide beta-1,3-N-acetylglucosaminyltransferase 3 (B3GNT3) from Homo sapiens (Human).